Here is a 321-residue protein sequence, read N- to C-terminus: Tetraacyldisaccharide 4'-kinase (321 aa).

ATP is bound at residue 54–61; that stretch reads SVGGTGKT.

The protein belongs to the LpxK family.

It carries out the reaction a lipid A disaccharide + ATP = a lipid IVA + ADP + H(+). Its pathway is glycolipid biosynthesis; lipid IV(A) biosynthesis; lipid IV(A) from (3R)-3-hydroxytetradecanoyl-[acyl-carrier-protein] and UDP-N-acetyl-alpha-D-glucosamine: step 6/6. Transfers the gamma-phosphate of ATP to the 4'-position of a tetraacyldisaccharide 1-phosphate intermediate (termed DS-1-P) to form tetraacyldisaccharide 1,4'-bis-phosphate (lipid IVA). This chain is Tetraacyldisaccharide 4'-kinase, found in Rickettsia bellii (strain OSU 85-389).